A 1177-amino-acid chain; its full sequence is Dynein axonemal assembly factor 9 (1177 aa).

The tract at residues 1–27 (MDVYPPRRQGLPRARSPGGSSRGSPSV) is disordered. Positions 11–27 (LPRARSPGGSSRGSPSV) are enriched in low complexity.

Interacts with ARL3.

In terms of biological role, may act as an effector for ARL3. The chain is Dynein axonemal assembly factor 9 from Homo sapiens (Human).